Here is an 86-residue protein sequence, read N- to C-terminus: Large ribosomal subunit protein bL31B (86 aa).

This sequence belongs to the bacterial ribosomal protein bL31 family. Type B subfamily. In terms of assembly, part of the 50S ribosomal subunit.

The polypeptide is Large ribosomal subunit protein bL31B (Burkholderia cenocepacia (strain ATCC BAA-245 / DSM 16553 / LMG 16656 / NCTC 13227 / J2315 / CF5610) (Burkholderia cepacia (strain J2315))).